We begin with the raw amino-acid sequence, 167 residues long: Leptin (167 aa).

A signal peptide spans 1–21 (MHWGTLCGFLWLWPYLFYVQA). Residues cysteine 117 and cysteine 167 are joined by a disulfide bond.

This sequence belongs to the leptin family. In terms of assembly, interacts with SIGLEC6. Adipose tissue is the main source of leptin. It is also produced by other peripheral tissues such as the skeletal muscle. Expressed by intercalated and striated tracts of submandibular and parotid salivary gland intralobular ducts. Detected by fundic epithelium of the gastric mucosa. Secreted into blood and gastric juice.

Its subcellular location is the secreted. Key player in the regulation of energy balance and body weight control. Once released into the circulation, has central and peripheral effects by binding LEPR, found in many tissues, which results in the activation of several major signaling pathways. In the hypothalamus, acts as an appetite-regulating factor that induces a decrease in food intake and an increase in energy consumption by inducing anorexinogenic factors and suppressing orexigenic neuropeptides, also regulates bone mass and secretion of hypothalamo-pituitary-adrenal hormones. In the periphery, increases basal metabolism, influences reproductive function, regulates pancreatic beta-cell function and insulin secretion, is pro-angiogenic for endothelial cell and affects innate and adaptive immunity. In the arcuate nucleus of the hypothalamus, activates by depolarization POMC neurons inducing FOS and SOCS3 expression to release anorexigenic peptides and inhibits by hyperpolarization NPY neurons inducing SOCS3 with a consequent reduction on release of orexigenic peptides. In addition to its known satiety inducing effect, has a modulatory role in nutrient absorption. In the intestine, reduces glucose absorption by enterocytes by activating PKC and leading to a sequential activation of p38, PI3K and ERK signaling pathways which exerts an inhibitory effect on glucose absorption. Acts as a growth factor on certain tissues, through the activation of different signaling pathways increases expression of genes involved in cell cycle regulation such as CCND1, via JAK2-STAT3 pathway, or VEGFA, via MAPK1/3 and PI3K-AKT1 pathways. May also play an apoptotic role via JAK2-STAT3 pathway and up-regulation of BIRC5 expression. Pro-angiogenic, has mitogenic activity on vascular endothelial cells and plays a role in matrix remodeling by regulating the expression of matrix metalloproteinases (MMPs) and tissue inhibitors of metalloproteinases (TIMPs). In innate immunity, modulates the activity and function of neutrophils by increasing chemotaxis and the secretion of oxygen radicals. Increases phagocytosis by macrophages and enhances secretion of pro-inflammatory mediators. Increases cytotoxic ability of NK cells. Plays a pro-inflammatory role, in synergy with IL1B, by inducing NOS2 which promotes the production of IL6, IL8 and Prostaglandin E2, through a signaling pathway that involves JAK2, PI3K, MAP2K1/MEK1 and MAPK14/p38. In adaptive immunity, promotes the switch of memory T-cells towards T helper-1 cell immune responses. Increases CD4(+)CD25(-) T-cell proliferation and reduces autophagy during TCR (T-cell receptor) stimulation, through MTOR signaling pathway activation and BCL2 up-regulation. In Homo sapiens (Human), this protein is Leptin.